The following is a 115-amino-acid chain: Histone H2A-Bbd type 2/3 (115 aa).

The disordered stretch occupies residues 1 to 21 (MPRRRRRRGSSGAGGRGRTCS). Residues 87 to 115 (LLDMVVHNDRLLSTLFNTTTISQVAPGED) are docking domain.

It belongs to the histone H2A family. In terms of assembly, the nucleosome is a histone octamer containing two molecules each of H2A, H2B, H3 and H4 assembled in one H3-H4 heterotetramer and two H2A-H2B heterodimers. May be incorporated into a proportion of nucleosomes, replacing one or more H2A molecules. In terms of tissue distribution, present in mature sperm.

The protein localises to the nucleus. It localises to the chromosome. Its function is as follows. Atypical histone H2A which can replace conventional H2A in some nucleosomes and is associated with active transcription and mRNA processing. Nucleosomes wrap and compact DNA into chromatin, limiting DNA accessibility to the cellular machineries which require DNA as a template. Histones thereby play a central role in transcription regulation, DNA repair, DNA replication and chromosomal stability. Nucleosomes containing this histone are less rigid and organize less DNA than canonical nucleosomes in vivo. They are enriched in actively transcribed genes and associate with the elongating form of RNA polymerase. They associate with spliceosome components and are required for mRNA splicing. May participate in spermatogenesis. The chain is Histone H2A-Bbd type 2/3 from Homo sapiens (Human).